Reading from the N-terminus, the 549-residue chain is Oxygen-dependent choline dehydrogenase (549 aa).

4 to 33 contacts FAD; sequence DYIIIGSGSAGSALAHRLSEDSRNSVIVLE. Catalysis depends on His-465, which acts as the Proton acceptor.

Belongs to the GMC oxidoreductase family. The cofactor is FAD.

It carries out the reaction choline + A = betaine aldehyde + AH2. The enzyme catalyses betaine aldehyde + NAD(+) + H2O = glycine betaine + NADH + 2 H(+). Its pathway is amine and polyamine biosynthesis; betaine biosynthesis via choline pathway; betaine aldehyde from choline (cytochrome c reductase route): step 1/1. Involved in the biosynthesis of the osmoprotectant glycine betaine. Catalyzes the oxidation of choline to betaine aldehyde and betaine aldehyde to glycine betaine at the same rate. The protein is Oxygen-dependent choline dehydrogenase of Sinorhizobium fredii (strain NBRC 101917 / NGR234).